The primary structure comprises 577 residues: Arginine--tRNA ligase (577 aa).

A 'HIGH' region motif is present at residues 122–132 (PNVAKEMHVGH).

Belongs to the class-I aminoacyl-tRNA synthetase family. Monomer.

It is found in the cytoplasm. It carries out the reaction tRNA(Arg) + L-arginine + ATP = L-arginyl-tRNA(Arg) + AMP + diphosphate. This Escherichia coli O1:K1 / APEC protein is Arginine--tRNA ligase.